The chain runs to 377 residues: MRRAEENNGFGTIPKRRNQHTPFYASIGMIVVIIVAFTSYHITSYGDDRNRAMRQYSFTFSLAYLAFLVGELLRRCCLFAEEYRHIETRYNGSLKKAIQTTFSFGHNNVLFVASLLFFVVFVASNDPNGSSSVIQGNSTAEPHTEMRQTSGWQGLWGQFIISALLTPLVVHLLGLRELSKVEESQLNEKENKNVADGLAWSYYFGYLKFVLPELEKQIEKTSKFRSKEKFVKKMFILIPSNCFWDDKIPGSDYDPQNRITFEGNTEPLEKTRGGVFLRHYKHSVYEIKDGENEPWFCIMEYATPLLTLYDMSVAQPGELSREERDAQVVVFLRKLQDILEGDRACQGKYELVTFSPDRDLADVMLRKLKDSELEIGG.

The Cytoplasmic portion of the chain corresponds to 1–21; the sequence is MRRAEENNGFGTIPKRRNQHT. The chain crosses the membrane as a helical span at residues 22-42; that stretch reads PFYASIGMIVVIIVAFTSYHI. The Extracellular portion of the chain corresponds to 43 to 57; that stretch reads TSYGDDRNRAMRQYS. A helical transmembrane segment spans residues 58–80; the sequence is FTFSLAYLAFLVGELLRRCCLFA. Residues 81–101 lie on the Cytoplasmic side of the membrane; the sequence is EEYRHIETRYNGSLKKAIQTT. A helical membrane pass occupies residues 102 to 122; sequence FSFGHNNVLFVASLLFFVVFV. The Extracellular portion of the chain corresponds to 123 to 154; that stretch reads ASNDPNGSSSVIQGNSTAEPHTEMRQTSGWQG. A helical transmembrane segment spans residues 155–175; it reads LWGQFIISALLTPLVVHLLGL. The Cytoplasmic portion of the chain corresponds to 176–377; the sequence is RELSKVEESQ…LKDSELEIGG (202 aa). 2',3'-cGAMP contacts are provided by residues Tyr206, Arg272, 278–279, and Thr303; that span reads RH. Residues Tyr206, Arg272, Arg278, and 300-303 contribute to the 3',3'-c-di-GMP site; that span reads EYAT.

This sequence belongs to the TMEM173 family. In terms of assembly, homodimer.

The protein localises to the endoplasmic reticulum membrane. Functionally, sensor of cytosolic DNA from bacteria and viruses that promotes autophagy. Acts by recognizing and binding cyclic GMP-AMP (cGAMP), a messenger produced by CGAS in response to DNA in the cytosol. Following cGAMP-binding, promotes the formation of autophagosomes, leading to target cytosolic DNA for degradation by the lysosome. Exhibits guanine base-specific ligand recognition. Binds 3'-3'linked cGAMP, 2'-3' linked cGAMP and 3'-3' linked c-di-GMP with much greater affinity as compared to 3'-3' linked c-di-AMP. Lacks the C-terminal tail (CTT) found in mammalian orthologs which is essential for interferon signaling. The chain is Stimulator of interferon genes protein from Nematostella vectensis (Starlet sea anemone).